We begin with the raw amino-acid sequence, 283 residues long: Pantothenate synthetase (283 aa).

An ATP-binding site is contributed by 30–37 (MGNLHDGH). The Proton donor role is filled by His-37. Residue Gln-61 coordinates (R)-pantoate. Gln-61 lines the beta-alanine pocket. ATP is bound at residue 149–152 (GEKD). Residue Gln-155 coordinates (R)-pantoate. 186–189 (LSSR) contacts ATP.

Belongs to the pantothenate synthetase family. As to quaternary structure, homodimer.

Its subcellular location is the cytoplasm. The enzyme catalyses (R)-pantoate + beta-alanine + ATP = (R)-pantothenate + AMP + diphosphate + H(+). The protein operates within cofactor biosynthesis; (R)-pantothenate biosynthesis; (R)-pantothenate from (R)-pantoate and beta-alanine: step 1/1. Its function is as follows. Catalyzes the condensation of pantoate with beta-alanine in an ATP-dependent reaction via a pantoyl-adenylate intermediate. The protein is Pantothenate synthetase of Shigella sonnei (strain Ss046).